A 178-amino-acid polypeptide reads, in one-letter code: uncharacterized protein (178 aa).

It belongs to the tail fiber family.

This is an uncharacterized protein from Escherichia coli (strain K12).